A 383-amino-acid polypeptide reads, in one-letter code: GA-binding protein subunit beta-1 (383 aa).

At serine 2 the chain carries N-acetylserine. ANK repeat units lie at residues 5 to 34 (DLGKKLLEAARAGQDDEVRILMANGAPFTT) and 37 to 66 (LGTSPLHLAAQYGHYSTTEVLLRAGVSRDA). An N6-acetyllysine modification is found at lysine 69. 3 ANK repeats span residues 70-99 (VDRTPLHMAASEGHASIVEVLLKHGADVNA), 103-132 (LKMTALHWATEHNHQEVVELLIKYGADVHT), and 136-166 (FCKTAFDISIDNGNEDLAEILQIAMQNQINT). An N6-acetyllysine mark is found at lysine 340 and lysine 369.

In terms of assembly, heterotetramer of two alpha and two beta subunits. Interacts with HCFC1, causing repression of transcriptional activity. Acetylated by EP300/p300. Deacetylated by SIRT7, promoting heterotetramerization and activity.

It localises to the nucleus. In terms of biological role, transcription factor capable of interacting with purine rich repeats (GA repeats). Acts as a master regulator of nuclear-encoded mitochondrial genes. This chain is GA-binding protein subunit beta-1 (GABPB1), found in Bos taurus (Bovine).